The following is a 124-amino-acid chain: Small ribosomal subunit protein uS10z/uS10x (124 aa).

The protein belongs to the universal ribosomal protein uS10 family.

The chain is Small ribosomal subunit protein uS10z/uS10x (RPS20A) from Arabidopsis thaliana (Mouse-ear cress).